The chain runs to 624 residues: PTS system mannitol-specific EIICBA component (624 aa).

The PTS EIIC type-2 domain occupies 13-336; it reads FGRFLSNMVM…SFVIASFFLK (324 aa). A run of 6 helical transmembrane segments spans residues 25 to 46, 51 to 71, 135 to 156, 166 to 186, 274 to 293, and 314 to 335; these read IGAF…WLPN, KLVG…SGGK, SSGI…PAVK, VDIL…EPAK, VIAG…AGLV, and VGVL…SFFL. The PTS EIIB type-2 domain maps to 372–463; that stretch reads QKIFVACDAG…LVQDLSNTKV (92 aa). The active-site Phosphocysteine intermediate; for EIIB activity is Cys-378. Cys-378 is modified (phosphocysteine; by EIIA). One can recognise a PTS EIIA type-2 domain in the interval 482 to 624; it reads FVLTEKQVFL…VEKVLALLKA (143 aa). Catalysis depends on His-542, which acts as the Tele-phosphohistidine intermediate; for EIIA activity. Position 542 is a phosphohistidine; by HPr (His-542).

In terms of assembly, homodimer. An intramolecular phosphotransfer takes places between His-542 and Cys-378.

Its subcellular location is the cell inner membrane. It carries out the reaction D-mannitol(out) + N(pros)-phospho-L-histidyl-[protein] = D-mannitol 1-phosphate(in) + L-histidyl-[protein]. The phosphoenolpyruvate-dependent sugar phosphotransferase system (sugar PTS), a major carbohydrate active transport system, catalyzes the phosphorylation of incoming sugar substrates concomitantly with their translocation across the cell membrane. This system is involved in D-mannitol transport. This is PTS system mannitol-specific EIICBA component (mtlA) from Pasteurella multocida (strain Pm70).